Reading from the N-terminus, the 610-residue chain is Tyrosine-protein kinase Drl (610 aa).

The signal sequence occupies residues 1 to 20 (MAPNLLTIGLLLTLIASGQA). Over 21–242 (HLNIFLNLHE…RENLVPPASG (222 aa)) the chain is Extracellular. Residues 24–155 (IFLNLHEVLR…NLIFKRKKIC (132 aa)) enclose the WIF domain. Asparagine 63, asparagine 99, and asparagine 143 each carry an N-linked (GlcNAc...) asparagine glycan. Residues 202–230 (QAPEKQRPVVTESPVGRGNSGGSKRDFDP) are disordered. The helical transmembrane segment at 243 to 263 (LVTLIVGGILALVLVSTLILI) threads the bilayer. The Cytoplasmic portion of the chain corresponds to 264–610 (AYCAKGPSKR…EFHTQITRYV (347 aa)). The region spanning 343–606 (VRLSCLVQEG…ICLSEFHTQI (264 aa)) is the Protein kinase domain. ATP is bound by residues 349 to 357 (VQEGNFGRI) and lysine 371. Aspartate 468 (proton acceptor) is an active-site residue. Position 498 is a phosphotyrosine; by autocatalysis (tyrosine 498).

It belongs to the protein kinase superfamily. Tyr protein kinase family. As to expression, in the embryonic abdominal hemisegment, expression is restricted to cell body, axon and growth cone of a cluster of 20 ventral nerve cord interneurons. During muscle growth and attachment events in the embryonic abdominal hemisegment, expression is in somatic muscle fibers 21-23 at 10-13 hours and 2 patches of approximately 15 neighboring epidermal cells (dorsal and ventral attachment sites) at 6-13 hours.

It is found in the cell membrane. It catalyses the reaction L-tyrosyl-[protein] + ATP = O-phospho-L-tyrosyl-[protein] + ADP + H(+). In terms of biological role, probable coreceptor of Wnt proteins. Involved in neuronal pathway recognition and ventral muscle attachment site selection. Non-vital for development. May be part of a signal transduction cascade involved in learning and possibly memory. The sequence is that of Tyrosine-protein kinase Drl (drl) from Drosophila melanogaster (Fruit fly).